Consider the following 435-residue polypeptide: Glutamate-1-semialdehyde 2,1-aminomutase (435 aa).

Lys-266 bears the N6-(pyridoxal phosphate)lysine mark.

It belongs to the class-III pyridoxal-phosphate-dependent aminotransferase family. HemL subfamily. As to quaternary structure, homodimer. Requires pyridoxal 5'-phosphate as cofactor.

It is found in the cytoplasm. The catalysed reaction is (S)-4-amino-5-oxopentanoate = 5-aminolevulinate. Its pathway is porphyrin-containing compound metabolism; protoporphyrin-IX biosynthesis; 5-aminolevulinate from L-glutamyl-tRNA(Glu): step 2/2. This Coxiella burnetii (strain CbuG_Q212) (Coxiella burnetii (strain Q212)) protein is Glutamate-1-semialdehyde 2,1-aminomutase.